The primary structure comprises 134 residues: Beta-synuclein (134 aa).

2 tandem repeats follow at residues 20–30 (EKTKQGVTEAA) and 31–41 (EKTKEGVLYVG). Residues 20-67 (EKTKQGVTEAAEKTKEGVLYVGSKTREGVVQGVASVAEKTKEQASHLG) form a 4 X 11 AA tandem repeats of [EGS]-K-T-K-[EQ]-[GQ]-V-X(4) region. Residues 42-56 (SKTREGVVQGVASVA) form a 3; approximate repeat. Residues 57–67 (EKTKEQASHLG) form repeat 4. The interval 89 to 134 (FPTDLKPEEVAQEAAEEPLIEPLMEPEGESYEDPPQEEYQEYEPEA) is disordered. Over residues 98–134 (VAQEAAEEPLIEPLMEPEGESYEDPPQEEYQEYEPEA) the composition is skewed to acidic residues. Phosphoserine; by BARK1, CK2 and GRK5 is present on Ser118.

This sequence belongs to the synuclein family. Phosphorylated. Phosphorylation by G-protein coupled receptor kinases (GRK) is more efficient than phosphorylation by CK1, CK2 and CaM-kinase II. Expressed predominantly in brain; concentrated in presynaptic nerve terminals.

The protein resides in the cytoplasm. In terms of biological role, non-amyloid component of senile plaques found in Alzheimer disease. Could act as a regulator of SNCA aggregation process. Protects neurons from staurosporine and 6-hydroxy dopamine (6OHDA)-stimulated caspase activation in a p53/TP53-dependent manner. Contributes to restore the SNCA anti-apoptotic function abolished by 6OHDA. Not found in the Lewy bodies associated with Parkinson disease. The sequence is that of Beta-synuclein (SNCB) from Homo sapiens (Human).